Consider the following 209-residue polypeptide: Kynurenine formamidase (209 aa).

Tryptophan 20 serves as a coordination point for substrate. Histidine 50, histidine 54, and aspartate 56 together coordinate Zn(2+). Catalysis depends on histidine 60, which acts as the Proton donor/acceptor. Residues histidine 161 and glutamate 173 each coordinate Zn(2+).

It belongs to the Cyclase 1 superfamily. KynB family. As to quaternary structure, homodimer. It depends on Zn(2+) as a cofactor.

The catalysed reaction is N-formyl-L-kynurenine + H2O = L-kynurenine + formate + H(+). Its pathway is amino-acid degradation; L-tryptophan degradation via kynurenine pathway; L-kynurenine from L-tryptophan: step 2/2. Catalyzes the hydrolysis of N-formyl-L-kynurenine to L-kynurenine, the second step in the kynurenine pathway of tryptophan degradation. The chain is Kynurenine formamidase from Bacillus thuringiensis (strain Al Hakam).